Here is a 472-residue protein sequence, read N- to C-terminus: Glutamate--tRNA ligase (472 aa).

The 'HIGH' region motif lies at 8 to 18 (PSPTGFLHIGS). A 'KMSKS' region motif is present at residues 239–243 (KLSKR). Position 242 (lysine 242) interacts with ATP.

Belongs to the class-I aminoacyl-tRNA synthetase family. Glutamate--tRNA ligase type 1 subfamily. As to quaternary structure, monomer.

The protein localises to the cytoplasm. The enzyme catalyses tRNA(Glu) + L-glutamate + ATP = L-glutamyl-tRNA(Glu) + AMP + diphosphate. Functionally, catalyzes the attachment of glutamate to tRNA(Glu) in a two-step reaction: glutamate is first activated by ATP to form Glu-AMP and then transferred to the acceptor end of tRNA(Glu). In Solibacter usitatus (strain Ellin6076), this protein is Glutamate--tRNA ligase.